Consider the following 282-residue polypeptide: Shikimate dehydrogenase (NADP(+)) (282 aa).

Shikimate-binding positions include 15–17 (SKS) and Thr-62. Residue Lys-66 is the Proton acceptor of the active site. The shikimate site is built by Asn-87 and Asp-103. Residues 127-131 (GAGGA), 151-156 (NRTHTK), and Met-220 each bind NADP(+). Shikimate is bound at residue Tyr-222. An NADP(+)-binding site is contributed by Gly-244.

Belongs to the shikimate dehydrogenase family. In terms of assembly, homodimer.

It carries out the reaction shikimate + NADP(+) = 3-dehydroshikimate + NADPH + H(+). It participates in metabolic intermediate biosynthesis; chorismate biosynthesis; chorismate from D-erythrose 4-phosphate and phosphoenolpyruvate: step 4/7. Functionally, involved in the biosynthesis of the chorismate, which leads to the biosynthesis of aromatic amino acids. Catalyzes the reversible NADPH linked reduction of 3-dehydroshikimate (DHSA) to yield shikimate (SA). This Shewanella baltica (strain OS155 / ATCC BAA-1091) protein is Shikimate dehydrogenase (NADP(+)).